Reading from the N-terminus, the 254-residue chain is NAD kinase (254 aa).

Asp-44 (proton acceptor) is an active-site residue. NAD(+)-binding positions include 44 to 45 (DG), 114 to 115 (NE), Asp-144, Ala-152, 155 to 160 (TAYNYS), and Ala-179.

It belongs to the NAD kinase family. A divalent metal cation is required as a cofactor.

The protein localises to the cytoplasm. The catalysed reaction is NAD(+) + ATP = ADP + NADP(+) + H(+). Involved in the regulation of the intracellular balance of NAD and NADP, and is a key enzyme in the biosynthesis of NADP. Catalyzes specifically the phosphorylation on 2'-hydroxyl of the adenosine moiety of NAD to yield NADP. This Cereibacter sphaeroides (strain ATCC 17029 / ATH 2.4.9) (Rhodobacter sphaeroides) protein is NAD kinase.